The chain runs to 417 residues: Methyltransferase/ribosomally synthesized cyclic peptide lentinulin A precursor ledMA (417 aa).

A methyltransferase domain region spans residues 1–251 (METPTLNKSG…GVSTFYIPPK (251 aa)). Active-site residues include R72, Y76, and Y98. 8 residues coordinate S-adenosyl-L-methionine: Y98, H100, V103, A130, Q172, A213, S244, and T245. The tract at residues 252-378 (ERKEINVDII…WAFRCAMKEM (127 aa)) is clasp domain. Residues 379-399 (PISLLDNAKQSMEEASEQGFP) form a precursor leader region. An N-methylisoleucine modification is found at I401. V403 and V404 each carry N-methylvaline. Residue G405 is modified to N-methylglycine. An N-methylvaline mark is found at V406 and V407. G408 bears the N-methylglycine mark. V410 is modified (N-methylvaline). G411 carries the N-methylglycine modification. Position 413 is an N-methylvaline (V413).

The protein in the N-terminal section; belongs to the precorrin methyltransferase family. In terms of assembly, homodimer. LedMA automethylates at Ile-401, Val-403, Val-404, Gly-405, Val-406, Val-407, Gly-408, Val-410, Gly-411 and Val-413 before being processed by the prolyloligopeptidase ledP which likely forms a peptidyl ester upon removal of the follower propeptide, which then undergoes macrocyclization with the N-terminus of the modified core peptide. Peptide backbone alpha-N-methylations change the physicochemical properties of amide bonds to provide structural constraints and other favorable characteristics including biological membrane permeability to peptides.

It functions in the pathway mycotoxin biosynthesis. Its function is as follows. Fusion protein of the methyltransferase ledM and the lentinulin A core peptide; part of the gene cluster that mediates the biosynthesis of lentinulin A, a highly methylated cyclic dodecapeptide with nematodicidal activity. Lentinulin A derives from the C-terminus of the ledMA protein, and it is the ledMA protein that methylates its own C-terminus using S-adenosyl methionine (SAM). The C-terminus is subsequently cleaved off and macrocyclized by the prolyloligopeptidase ledP to give the final product. The chain is Methyltransferase/ribosomally synthesized cyclic peptide lentinulin A precursor ledMA from Lentinula edodes (Shiitake mushroom).